A 409-amino-acid chain; its full sequence is 4-hydroxy-3-methylbut-2-en-1-yl diphosphate synthase (flavodoxin) (409 aa).

Positions 298, 301, 344, and 351 each coordinate [4Fe-4S] cluster.

It belongs to the IspG family. [4Fe-4S] cluster is required as a cofactor.

It catalyses the reaction (2E)-4-hydroxy-3-methylbut-2-enyl diphosphate + oxidized [flavodoxin] + H2O + 2 H(+) = 2-C-methyl-D-erythritol 2,4-cyclic diphosphate + reduced [flavodoxin]. It functions in the pathway isoprenoid biosynthesis; isopentenyl diphosphate biosynthesis via DXP pathway; isopentenyl diphosphate from 1-deoxy-D-xylulose 5-phosphate: step 5/6. In terms of biological role, converts 2C-methyl-D-erythritol 2,4-cyclodiphosphate (ME-2,4cPP) into 1-hydroxy-2-methyl-2-(E)-butenyl 4-diphosphate. The chain is 4-hydroxy-3-methylbut-2-en-1-yl diphosphate synthase (flavodoxin) from Dechloromonas aromatica (strain RCB).